The sequence spans 440 residues: Tryptophan synthase beta chain (440 aa).

The residue at position 110 (K110) is an N6-(pyridoxal phosphate)lysine.

The protein belongs to the TrpB family. In terms of assembly, tetramer of two alpha and two beta chains. The cofactor is pyridoxal 5'-phosphate.

It carries out the reaction (1S,2R)-1-C-(indol-3-yl)glycerol 3-phosphate + L-serine = D-glyceraldehyde 3-phosphate + L-tryptophan + H2O. The protein operates within amino-acid biosynthesis; L-tryptophan biosynthesis; L-tryptophan from chorismate: step 5/5. The beta subunit is responsible for the synthesis of L-tryptophan from indole and L-serine. The chain is Tryptophan synthase beta chain from Thermococcus gammatolerans (strain DSM 15229 / JCM 11827 / EJ3).